The primary structure comprises 69 residues: ATP synthase F(0) complex subunit e, mitochondrial (69 aa).

The residue at position 34 (Lys-34) is an N6-acetyllysine. Residue Ser-66 is modified to Phosphoserine.

This sequence belongs to the ATPase e subunit family. Component of the ATP synthase complex composed at least of ATP5F1A/subunit alpha, ATP5F1B/subunit beta, ATP5MC1/subunit c (homooctomer), MT-ATP6/subunit a, MT-ATP8/subunit 8, ATP5ME/subunit e, ATP5MF/subunit f, ATP5MG/subunit g, ATP5MK/subunit k, ATP5MJ/subunit j, ATP5F1C/subunit gamma, ATP5F1D/subunit delta, ATP5F1E/subunit epsilon, ATP5PF/subunit F6, ATP5PB/subunit b, ATP5PD/subunit d, ATP5PO/subunit OSCP. ATP synthase complex consists of a soluble F(1) head domain (subunits alpha(3) and beta(3)) - the catalytic core - and a membrane F(0) domain - the membrane proton channel (subunits c, a, 8, e, f, g, k and j). These two domains are linked by a central stalk (subunits gamma, delta, and epsilon) rotating inside the F1 region and a stationary peripheral stalk (subunits F6, b, d, and OSCP).

It is found in the mitochondrion. It localises to the mitochondrion inner membrane. Functionally, subunit e, of the mitochondrial membrane ATP synthase complex (F(1)F(0) ATP synthase or Complex V) that produces ATP from ADP in the presence of a proton gradient across the membrane which is generated by electron transport complexes of the respiratory chain. ATP synthase complex consist of a soluble F(1) head domain - the catalytic core - and a membrane F(1) domain - the membrane proton channel. These two domains are linked by a central stalk rotating inside the F(1) region and a stationary peripheral stalk. During catalysis, ATP synthesis in the catalytic domain of F(1) is coupled via a rotary mechanism of the central stalk subunits to proton translocation. In vivo, can only synthesize ATP although its ATP hydrolase activity can be activated artificially in vitro. Part of the complex F(0) domain. The sequence is that of ATP synthase F(0) complex subunit e, mitochondrial from Homo sapiens (Human).